We begin with the raw amino-acid sequence, 263 residues long: 4-hydroxy-tetrahydrodipicolinate reductase (263 aa).

NAD(+) contacts are provided by residues 8–13 (GASGRM), Asp-34, 99–101 (GTT), and 125–128 (SPNY). The active-site Proton donor/acceptor is His-157. His-158 contacts (S)-2,3,4,5-tetrahydrodipicolinate. The Proton donor role is filled by Lys-161. Position 167-168 (167-168 (GT)) interacts with (S)-2,3,4,5-tetrahydrodipicolinate.

It belongs to the DapB family.

Its subcellular location is the cytoplasm. The catalysed reaction is (S)-2,3,4,5-tetrahydrodipicolinate + NAD(+) + H2O = (2S,4S)-4-hydroxy-2,3,4,5-tetrahydrodipicolinate + NADH + H(+). It carries out the reaction (S)-2,3,4,5-tetrahydrodipicolinate + NADP(+) + H2O = (2S,4S)-4-hydroxy-2,3,4,5-tetrahydrodipicolinate + NADPH + H(+). It functions in the pathway amino-acid biosynthesis; L-lysine biosynthesis via DAP pathway; (S)-tetrahydrodipicolinate from L-aspartate: step 4/4. In terms of biological role, catalyzes the conversion of 4-hydroxy-tetrahydrodipicolinate (HTPA) to tetrahydrodipicolinate. The chain is 4-hydroxy-tetrahydrodipicolinate reductase from Methanococcoides burtonii (strain DSM 6242 / NBRC 107633 / OCM 468 / ACE-M).